Consider the following 122-residue polypeptide: Putative MOB kinase activator-like 2B (122 aa).

2 residues coordinate Zn(2+): H69 and H74.

Belongs to the MOB1/phocein family.

It localises to the nucleus. Its subcellular location is the cytoplasm. The protein localises to the cytoskeleton. The protein resides in the phragmoplast. The sequence is that of Putative MOB kinase activator-like 2B from Arabidopsis thaliana (Mouse-ear cress).